The primary structure comprises 209 residues: Lectin (209 aa).

In terms of assembly, homodimer; non-covalently linked.

Its function is as follows. Binds chito-oligosaccherides. Has hemagglutinating activity towards rabbit erythrocytes. In Luffa acutangula (Ridged gourd), this protein is Lectin.